Consider the following 886-residue polypeptide: KH domain-containing protein hrpk-2 (886 aa).

Over residues 359 to 368 the composition is skewed to basic and acidic residues; that stretch reads DNHFYNDKDS. Residues 359–433 are disordered; sequence DNHFYNDKDS…SHRKESACVD (75 aa). Composition is skewed to basic residues over residues 369–388 and 415–425; these read GKHH…KKHY and HERKKRQRSSH. 2 consecutive KH domains span residues 698 to 761 and 775 to 839; these read KETV…IEKI and PGIF…AYLT.

This is KH domain-containing protein hrpk-2 from Caenorhabditis elegans.